A 624-amino-acid chain; its full sequence is Ubiquitin-associated and SH3 domain-containing protein A (624 aa).

One can recognise a UBA domain in the interval 19 to 60; it reads RSTPSLLDPLLAMGFPTHTALKALAATGRKTAEAAADWLHGH. Residues 238–303 enclose the SH3 domain; it reads VHYQTLKALF…PENYTERANE (66 aa). Residues 358 to 624 are phosphatase-like; that stretch reads RRGILVVRHG…FNWRNWISSN (267 aa).

In terms of assembly, homodimer or homooligomer. Interacts with CBL. Part of a complex containing CBL and activated EGFR. Interacts with ubiquitin and with mono-ubiquitinated proteins. Interacts with dynamin.

It localises to the cytoplasm. The protein resides in the nucleus. Functionally, interferes with CBL-mediated down-regulation and degradation of receptor-type tyrosine kinases. Promotes accumulation of activated target receptors, such as T-cell receptors, EGFR and PDGFRB, on the cell surface. May inhibit dynamin-dependent endocytic pathways by functionally sequestering dynamin via its SH3 domain. Exhibits negligible protein tyrosine phosphatase activity at neutral pH. May act as a dominant-negative regulator of UBASH3B-dependent dephosphorylation. The sequence is that of Ubiquitin-associated and SH3 domain-containing protein A (Ubash3a) from Mus musculus (Mouse).